A 1231-amino-acid chain; its full sequence is Protein FAM193A (1231 aa).

Residues 106-142 (CTEDMYSTLLQRYQRSEEELRKVAEEWLECQKRIDAY) are a coiled coil. The tract at residues 249-272 (DYLSEMRPPSVSSASSGSGSSSPI) is disordered. The segment covering 258–270 (SVSSASSGSGSSS) has biased composition (low complexity). S293 is subject to Phosphoserine. Disordered regions lie at residues 331-405 (NGGG…QAEQ), 633-703 (QSSS…APSF), 719-789 (SFCP…NQKE), 826-845 (LTKR…EREG), and 860-1174 (NSSE…SSLD). A compositionally biased stretch (acidic residues) spans 355 to 365 (EADDEDADGES). At S648 the chain carries Phosphoserine. The span at 676-691 (LAPLPALSPSALSPAS) shows a compositional bias: low complexity. The segment covering 761 to 773 (QQDDGDESADEDS) has biased composition (acidic residues). Residues 776-785 (EHSSSTSTST) are compositionally biased toward low complexity. Over residues 872–881 (AAKRARHKQR) the composition is skewed to basic residues. Residues 877–973 (RHKQRKLEEK…ATESISNSEN (97 aa)) adopt a coiled-coil conformation. Over residues 882–909 (KLEEKARLEAEARAREHLHHQEEQKQRE) the composition is skewed to basic and acidic residues. Residues 910-920 (EEEDEEEEDEE) are compositionally biased toward acidic residues. Residues 921–935 (QHFKEEFQRLQELQK) are compositionally biased toward basic and acidic residues. A compositionally biased stretch (basic residues) spans 937–946 (RAAKKKKKDR). Polar residues predominate over residues 962 to 979 (QAATESISNSENIHNGSL). Phosphoserine is present on residues S1136 and S1151. Over residues 1156–1166 (GKNKKNKKKKG) the composition is skewed to basic residues.

Belongs to the FAM193 family.

The chain is Protein FAM193A (Fam193a) from Mus musculus (Mouse).